A 339-amino-acid chain; its full sequence is Ketol-acid reductoisomerase (NADP(+)) (339 aa).

Residues 1–182 enclose the KARI N-terminal Rossmann domain; it reads MRVYYDRDAD…GGGRSGIIET (182 aa). NADP(+) contacts are provided by residues 24-27, lysine 48, serine 51, threonine 53, and 83-86; these read YGSQ and DELQ. Histidine 108 is a catalytic residue. Position 134 (glycine 134) interacts with NADP(+). Residues 183 to 328 enclose the KARI C-terminal knotted domain; the sequence is NFREECETDL…AKLRGMMPWI (146 aa). The Mg(2+) site is built by aspartate 191, glutamate 195, glutamate 227, and glutamate 231. Substrate is bound at residue serine 252.

It belongs to the ketol-acid reductoisomerase family. Requires Mg(2+) as cofactor.

The catalysed reaction is (2R)-2,3-dihydroxy-3-methylbutanoate + NADP(+) = (2S)-2-acetolactate + NADPH + H(+). It catalyses the reaction (2R,3R)-2,3-dihydroxy-3-methylpentanoate + NADP(+) = (S)-2-ethyl-2-hydroxy-3-oxobutanoate + NADPH + H(+). It functions in the pathway amino-acid biosynthesis; L-isoleucine biosynthesis; L-isoleucine from 2-oxobutanoate: step 2/4. It participates in amino-acid biosynthesis; L-valine biosynthesis; L-valine from pyruvate: step 2/4. Involved in the biosynthesis of branched-chain amino acids (BCAA). Catalyzes an alkyl-migration followed by a ketol-acid reduction of (S)-2-acetolactate (S2AL) to yield (R)-2,3-dihydroxy-isovalerate. In the isomerase reaction, S2AL is rearranged via a Mg-dependent methyl migration to produce 3-hydroxy-3-methyl-2-ketobutyrate (HMKB). In the reductase reaction, this 2-ketoacid undergoes a metal-dependent reduction by NADPH to yield (R)-2,3-dihydroxy-isovalerate. The protein is Ketol-acid reductoisomerase (NADP(+)) of Rhizobium etli (strain ATCC 51251 / DSM 11541 / JCM 21823 / NBRC 15573 / CFN 42).